The chain runs to 895 residues: ATFQDKQENSHIENEDKRLMSEQKEIVHFVSEGITPSTTALPDIVNLSTNYLDMTTREDRIHSIKDFLSGPIIIATNLWSSSDPVEKQLYTANFPEVLISNAMYQDKLKGFVGLRATLVVKVQVNSQPFQQGRLMLQYIPYAQYMPNRVTLINETLQGRSGCPTTDLELSVGTEVEMRIPYVSPHLYYNLITGQGSFGSIYVVVYSQLHDQVSGTGSIEYTVWAHLEDVDVQYPTGANIFTGNSPNYLSIAERIATGDFTETEMRKLWIHKTYLKRPARIYAQAAKELKQLETNNSPSTALGQISEGLTTLSHIPVLGNIFSTPAWISAKAADLAKLFGFSKPTVQGKIGECKLRGQGRMANFDGMDMSHKMALSSTNEIETKEGLAGTSLDEMDLSRVLSIPNYWDRFTWKTSDVTNTVLWDNYVSPFKVKPYSATITDRFRCTHMGYVANAFTYWRGSIVYTFKFVKTQYHSGRLRISFIPYYYNTTISTGTPDVSRTQKIVVDLRTSTEVSFTVPYIASRPWLYCIRPESSWLSKDNKDGALMYNCVSGIVRVEVLNQLVAAQNVFSEIDVICEVSGGPDLEFAGPTCPSYVPYAGDLTLADTRKIEAERTQEYSNNEDNRITTQCSRIVAQVMGEDQQIPRNEAQHGVHPISIDTHRISNNWSPQAMCIGEKIVSIRQLIKRFGIFGDANTLQADGSSFVVAPFTVTSPTKTLTSTRNYTQFDYYYYLYAFWRGSMRIKMVAETQDGTGTPRKKTNFTWFVRMFNSLQDSFNSLISTSSSAVTTTVLPSGTINMGPSTQVIDPTVEGLIEVEVPYYNISHITPAVTIDDGTPSMEDYLKGHSPPCLLTFSPRDSISATNHHITASFMRAPGDDFSFMYLLEVPPLVNVARA.

This sequence belongs to the picornaviruses polyprotein family. In terms of processing, specific enzymatic cleavages in vivo yield mature proteins.

The protein localises to the virion. The protein resides in the host cytoplasm. Functionally, precursor of all the viral capsid proteins. Its function is as follows. Capsid protein 1, together with capsid proteins 2 and 3, form an icosahedral capsid protecting the viral RNA genome. The icosahedral capsid has a pseudo-T=3 symmetry with a diameter of approximately 300 Angstroms, and is composed of 60 copies of each CP1, CP2, and CP3. CP1 is situated at the 12 fivefold axes, whereas CP2 and CP3 are located at the quasi-sixfold axes. All these proteins contain a beta-sheet structure called beta-barrel jelly roll. Capsid protein 4 is a tstructural component of the icosahedral capsid protecting the genomic RNA. It may play an important role in capsid assembly. In terms of biological role, capsid protein 2, together with capsid proteins 1 and 3, form an icosahedral capsid protecting the viral RNA genome. The icosahedral capsid has a pseudo-T=3 symmetry with a diameter of approximately 300 Angstroms, and is composed of 60 copies of each CP1, CP2, and CP3. CP1 is situated at the 12 fivefold axes, whereas CP2 and CP3 are located at the quasi-sixfold axes. All these proteins contain a beta-sheet structure called beta-barrel jelly roll. Functionally, capsid protein 3, together with capsid proteins 1 and 2, form an icosahedral capsid protecting the viral RNA genome. The icosahedral capsid has a pseudo-T=3 symmetry with a diameter of approximately 300 Angstroms, and is composed of 60 copies of each CP1, CP2, and CP3. CP1 is situated at the 12 fivefold axes, whereas CP2 and CP3 are located at the quasi-sixfold axes. All these proteins contain a beta-sheet structure called beta-barrel jelly roll. This Cricket paralysis virus (isolate Teleogryllus commodus/Australia/CrPVVIC/1968) (CrPV) protein is Structural polyprotein.